Consider the following 270-residue polypeptide: uncharacterized protein (270 aa).

One can recognise an ABC transporter domain in the interval 34 to 266 (LIARGLTKSY…PDVRRLYLGD (233 aa)). 66-73 (GPNGAGKT) is an ATP binding site.

The protein belongs to the ABC transporter superfamily.

This is an uncharacterized protein from Rhizobium meliloti (strain 1021) (Ensifer meliloti).